Reading from the N-terminus, the 127-residue chain is uncharacterized protein (127 aa).

At Thr-30 the chain carries Phosphothreonine. The tract at residues 51–75 (APTYEQVLYPPASQKKTSNSTSEES) is disordered. Position 63 is a phosphoserine (Ser-63).

This is an uncharacterized protein from Mus musculus (Mouse).